Here is a 219-residue protein sequence, read N- to C-terminus: uncharacterized protein (219 aa).

The RRM domain maps to 30–107; that stretch reads FRLFVGNLGN…RPVKLSRATS (78 aa). Residues 140–149 show a composition bias toward basic residues; the sequence is KKIKNKHGKN. The disordered stretch occupies residues 140–219; the sequence is KKIKNKHGKN…YSRASSFRRV (80 aa). Low complexity predominate over residues 150 to 169; it reads SSKSSRAAQSAAAELISSSS. A compositionally biased stretch (polar residues) spans 176–186; the sequence is ANSTSVPNAVN.

This is an uncharacterized protein from Schizosaccharomyces pombe (strain 972 / ATCC 24843) (Fission yeast).